The following is a 791-amino-acid chain: DNA repair and recombination protein RAD54-like (791 aa).

The span at 1-20 (MRRSLAPSQRIGQSTASRNA) shows a compositional bias: polar residues. A disordered region spans residues 1 to 53 (MRRSLAPSQRIGQSTASRNAFTPPLLQKKNKRACQKDLRLDTDADEDKERKRF). The interval 2 to 9 (RRSLAPSQ) is required for chromatin remodeling, strand pairing activities and coupling of ATPase activity. Thr-22 is modified (phosphothreonine). A compositionally biased stretch (basic and acidic residues) spans 34–53 (CQKDLRLDTDADEDKERKRF). In terms of domain architecture, Helicase ATP-binding spans 175-349 (EGKKGDFNGC…FSLVNFVNPE (175 aa)). 188 to 195 (DEMGLGKT) is an ATP binding site. A DEGH box motif is present at residues 300-303 (DEGH). The region spanning 506 to 663 (LLDFMLAAIR…NNESSEKHFT (158 aa)) is the Helicase C-terminal domain. The segment at 747 to 791 (KEVVESPESAAAEAESVEEESQPTQRKRPSPPLSDDSADEDFIGF) is disordered. Over residues 782–791 (DSADEDFIGF) the composition is skewed to acidic residues.

This sequence belongs to the SNF2/RAD54 helicase family. Interacts (via N-terminus) with spn-A/Rad51.

It localises to the nucleus. Involved in mitotic DNA repair and meiotic recombination. Functions in the recombinational DNA repair pathway. Essential for interhomolog gene conversion (GC), but may have a less important role in intersister GC than spn-A/Rad51. In the presence of DNA, spn-A/Rad51 enhances the ATPase activity of okr/Rad54. The chain is DNA repair and recombination protein RAD54-like from Drosophila ananassae (Fruit fly).